We begin with the raw amino-acid sequence, 278 residues long: Putative cysteine-rich repeat secretory protein 19 (278 aa).

A signal peptide spans 1–32; the sequence is MYSSSSVSKRFVLVPIVVVVTTQLLLVRNVSS. 2 consecutive Gnk2-homologous domains span residues 39–147 and 160–267; these read YLHH…SLDT and PSAK…LYPF.

It belongs to the cysteine-rich repeat secretory protein family.

It is found in the secreted. The polypeptide is Putative cysteine-rich repeat secretory protein 19 (CRRSP19) (Arabidopsis thaliana (Mouse-ear cress)).